The primary structure comprises 296 residues: Deleted in azoospermia-like (296 aa).

Positions 1-18 (MSAANPETPNSTISREAN) are enriched in polar residues. The segment at 1-25 (MSAANPETPNSTISREANTQSSSAA) is disordered. One can recognise an RRM domain in the interval 40–115 (NTVFVGGIDV…KKLKLGPAIR (76 aa)). Residues 80–132 (KGYGFVSFFNDVDVQKIVESQINFHGKKLKLGPAIRKQNLCAYHVQPRPLVFN) are homodimerization. Positions 167–190 (AYPPYPNSPVQVITGYQLPVYNYQ) constitute a DAZ domain. A Phosphotyrosine modification is found at Y277.

It belongs to the RRM DAZ family. Homodimer and heterodimer. Forms a heterodimer with DAZ. Interacts with BOLL, DAZAP1 and DAZAP2. Interacts with PUM2 Multiple DAZL RRMs can bind to a single RNA containing multiple GUU triplets. Testis specific.

The protein resides in the cytoplasm. It is found in the nucleus. Its function is as follows. RNA-binding protein, which is essential for gametogenesis in both males and females. Plays a central role during spermatogenesis. Acts by binding to the 3'-UTR of mRNA, specifically recognizing GUU triplets, and thereby regulating the translation of key transcripts. The chain is Deleted in azoospermia-like (DAZL) from Callithrix jacchus (White-tufted-ear marmoset).